The chain runs to 413 residues: 3-hydroxy-3-methylglutaryl-coenzyme A reductase (413 aa).

Active-site charge relay system residues include Glu-106 and Asp-312. His-408 acts as the Proton donor in catalysis.

The protein belongs to the HMG-CoA reductase family.

It carries out the reaction (R)-mevalonate + 2 NADP(+) + CoA = (3S)-3-hydroxy-3-methylglutaryl-CoA + 2 NADPH + 2 H(+). The protein operates within metabolic intermediate biosynthesis; (R)-mevalonate biosynthesis; (R)-mevalonate from acetyl-CoA: step 3/3. Converts HMG-CoA to mevalonate. This Pyrococcus horikoshii (strain ATCC 700860 / DSM 12428 / JCM 9974 / NBRC 100139 / OT-3) protein is 3-hydroxy-3-methylglutaryl-coenzyme A reductase (hmgA).